A 288-amino-acid chain; its full sequence is Protein CREG2 (288 aa).

An N-terminal signal peptide occupies residues 1 to 31; sequence MSLSGRERPAWPGSRLSWLLCCSALLSPAAG. Positions 78–100 are disordered; the sequence is AHKEDTHLRPRGSARARPAPAAR. N-linked (GlcNAc...) asparagine glycosylation is present at Asn164.

Belongs to the CREG family. Brain specific.

It localises to the secreted. This Mus musculus (Mouse) protein is Protein CREG2 (Creg2).